The primary structure comprises 115 residues: Probable K(+)/H(+) antiporter subunit C (115 aa).

Helical transmembrane passes span 4–21 (ILSA…YLLL), 28–47 (VIIG…FGMG), and 75–97 (ALVL…VLLA).

This sequence belongs to the CPA3 antiporters (TC 2.A.63) subunit C family. In terms of assembly, may form a hetero-oligomeric complex that consists of six subunits: PhaAB, PhaC, PhaD, PhaE, PhaF and PhaG.

The protein localises to the cell membrane. Functionally, part of a K(+) efflux system which is required for the adaptation of R.meliloti to alkaline pH as well as for the infection process during symbiotic nodule development. In Rhizobium meliloti (strain 1021) (Ensifer meliloti), this protein is Probable K(+)/H(+) antiporter subunit C (phaC).